A 279-amino-acid polypeptide reads, in one-letter code: Protein K1 (279 aa).

The N-terminal stretch at 1–18 is a signal peptide; sequence MFLYVVCSLAVCFRGLLS. The Extracellular portion of the chain corresponds to 19-220; sequence LSLQSSPNLC…TYLYIQEHLL (202 aa). The chain crosses the membrane as a helical span at residues 221-241; that stretch reads VFMTLVALIGTMCGILGTIIF. Residues 242–279 are Cytoplasmic-facing; that stretch reads AHCQKQRDSNKTVPQQLQDYYSLHDLCTEDYTQPVDWY.

As to quaternary structure, homooligomer.

It is found in the host membrane. Promotes host cell survival pathways and may contribute to pathogenesis by preventing infected cells from undergoing apoptosis. Acts in host B-cells by mimicking the activated B-cell receptor complex. The cytoplasmic tail of K1 can induce the phosphorylation of a number of different kinases, leading to the activation of survival signaling pathways. The polypeptide is Protein K1 (K1) (Human herpesvirus 8 type P (isolate GK18) (HHV-8)).